We begin with the raw amino-acid sequence, 298 residues long: Troponin T, cardiac muscle (298 aa).

Over residues 1 to 70 (MSDIEEVVEE…EAKEAEDGPM (70 aa)) the composition is skewed to acidic residues. 2 disordered regions span residues 1–95 (MSDI…GERV) and 120–219 (FENR…EKKK). The residue at position 2 (Ser2) is an N-acetylserine. Position 2 is a phosphoserine; by CK2 (Ser2). 2 stretches are compositionally biased toward basic and acidic residues: residues 120–183 (FENR…DEAR) and 203–219 (QTER…EKKK). A Phosphothreonine; by PKC/PRKCA modification is found at Thr204. The residue at position 208 (Ser208) is a Phosphoserine; by PKC/PRKCA. The residue at position 213 (Thr213) is a Phosphothreonine; by PKC/PRKCA and RAF1. Thr294 bears the Phosphothreonine; by PKC/PRKCA mark.

Belongs to the troponin T family. Phosphorylation at Thr-213 by PRKCA induces significant reduction in myofilament calcium sensitivity and actomyosin ATPase activity. Heart. The fetal heart shows a greater expression in the atrium than in the ventricle, while the adult heart shows a greater expression in the ventricle than in the atrium. Isoform 6 predominates in normal adult heart. Isoforms 1, 7 and 8 are expressed in fetal heart. Isoform 7 is also expressed in failing adult heart.

Its function is as follows. Troponin T is the tropomyosin-binding subunit of troponin, the thin filament regulatory complex which confers calcium-sensitivity to striated muscle actomyosin ATPase activity. This chain is Troponin T, cardiac muscle (TNNT2), found in Homo sapiens (Human).